Reading from the N-terminus, the 665-residue chain is MKKPFYITTPIYYPSGKLHIGSAYTTIACDVLARYKRLMGHEVFYLTGLDEHGQKIQTKAKEAGITPQTYVDNMAKDVKALWQLLDISYDKFIRTTDDYHEEVVAAVFEKLLAQDDIYLGEYSGWYSVSDEEFFTESQLKEVFRDEDGQVIGGIAPSGHEVEWVSEESYFLRLSKYADRLVAFFKERPDFIQPDGRMNEMVKNFIEPGLEDLAVSRTTFTWGVPVPSDPKHVVYVWIDALLNYATALGYGQANHANFDKFWNGTVFHMVGKDILRFHSIYWPILLMMLDLPMPDRLIAHGWFVMKDGKMSKSKGNVVYPEMLVERFGLDPLRYYLMRSLPVGSDGTFTPEDYVGRINYELANDLGNLLNRTVAMINKYFDGTVPAYVDNGTAFDADLSQVIDAQLADYHKHMEAVDYPRALEAVWTIIARTNKYIDETAPWVLAKEDGDKAQLASVMAHLAASLRVVAHVIQPFMMETSAAIMAQLGLAPVSDLSTLALADFPANTKVVAKGTPIFPRLDMEAEIDYIKAQMGDSSAISQEKEWVPEEVALKSEKDVITFETFDAVEIRVAEVKEVSKVEGSEKLLRFRVDAGDGQDRQILSGIAKCYPNEQELVGKKLQIVANLKPRKMMKKYISQGMILSAEHGDQLTVLTVDSSVPNGSIIG.

A 'HIGH' region motif is present at residues 12–22; that stretch reads YYPSGKLHIGS. The 'KMSKS' region motif lies at 308–312; the sequence is KMSKS. Lys311 contacts ATP. The tRNA-binding domain occupies 562 to 665; that stretch reads TFDAVEIRVA…SSVPNGSIIG (104 aa).

This sequence belongs to the class-I aminoacyl-tRNA synthetase family. MetG type 2B subfamily. In terms of assembly, homodimer.

The protein localises to the cytoplasm. The enzyme catalyses tRNA(Met) + L-methionine + ATP = L-methionyl-tRNA(Met) + AMP + diphosphate. In terms of biological role, is required not only for elongation of protein synthesis but also for the initiation of all mRNA translation through initiator tRNA(fMet) aminoacylation. The polypeptide is Methionine--tRNA ligase (metG) (Streptococcus pyogenes serotype M3 (strain SSI-1)).